Consider the following 518-residue polypeptide: Pre-glycoprotein polyprotein GP complex (518 aa).

Glycine 2 carries N-myristoyl glycine; by host lipidation. The Extracellular portion of the chain corresponds to 2 to 17 (GQVIGFFQSLPNIINE). The chain crosses the membrane as a helical span at residues 18 to 33 (ALNIALICVALIAILK). Residues 34–58 (GIVNIWKSGLIQLFIFLILAGRSCS) lie on the Cytoplasmic side of the membrane. Cysteine 57 serves as a coordination point for Zn(2+). Residues 59 to 456 (HTFQIGRNHE…QGSTPLSLVD (398 aa)) lie on the Extracellular side of the membrane. Intrachain disulfides connect cysteine 87/cysteine 258, cysteine 303/cysteine 316, cysteine 325/cysteine 334, and cysteine 388/cysteine 409. Asparagine 90, asparagine 112, asparagine 127, asparagine 180, and asparagine 251 each carry an N-linked (GlcNAc...) asparagine; by host glycan. N-linked (GlcNAc...) asparagine; by host glycosylation is found at asparagine 389, asparagine 397, asparagine 414, and asparagine 419. A helical transmembrane segment spans residues 457 to 477 (LCFWSTLFYVTTLFAHLVGFP). Residues 478 to 518 (THRHILDGPCPKPHRLTKKGICSCGHFGIPGKPVRWVKRSR) are Cytoplasmic-facing. The Zn(2+) site is built by histidine 479, histidine 481, cysteine 487, histidine 491, cysteine 499, and cysteine 501.

This sequence belongs to the arenaviridae GPC protein family. Interacts with glycoprotein G2. Part of the GP complex (GP-C) together with glycoprotein G1 and glycoprotein G2. The GP-complex interacts with protein Z, which interacts with ribonucleocapsid; these interactions may induce virion budding. As to quaternary structure, homotrimer; disulfide-linked. In pre-fusion state, G1 homotrimers bind G2 homotrimers via ionic interactions. Part of the GP complex (GP-C) together with glycoprotein G2 and the stable signal peptide. The GP-complex interacts with protein Z, which interacts with ribonucleocapsid; these interactions may induce virion budding. In terms of assembly, homotrimer. Interacts with the stable signal peptide. In pre-fusion state, G2 homotrimers bind G1 homotrimers via ionic interactions. Part of the GP complex (GP-C) together with glycoprotein G1 and the stable signal peptide. Acidification in the endosome triggers rearrangements, which ultimately leads to a 6 helix bundle formed by the two heptad repeat domains (HR1 and HR2) in post-fusion state. The GP-complex interacts with protein Z, which interacts with ribonucleocapsid; these interactions may induce virion budding. In terms of processing, specific enzymatic cleavages in vivo yield mature proteins. GP-C polyprotein is cleaved in the endoplasmic reticulum by the host protease MBTPS1. Only cleaved glycoprotein is incorporated into virions. The SSP remains stably associated with the GP complex following cleavage by signal peptidase and plays crucial roles in the trafficking of GP through the secretory pathway. Post-translationally, myristoylation is necessary for GP2-mediated fusion activity.

The protein resides in the virion membrane. Its subcellular location is the host endoplasmic reticulum membrane. It is found in the host Golgi apparatus membrane. The protein localises to the host cell membrane. Functions as a cleaved signal peptide that is retained as the third component of the GP complex (GP-C). Helps to stabilize the spike complex in its native conformation. The SSP is required for efficient glycoprotein expression, post-translational maturation cleavage of G1 and G2, glycoprotein transport to the cell surface plasma membrane, formation of infectious virus particles, and acid pH-dependent glycoprotein-mediated cell fusion. In terms of biological role, forms the virion spikes together with glycoprotein G2. The glycoprotein spike trimers are connected to the underlying matrix. Mediates virus attachment to host receptor alpha-dystroglycan DAG1. This attachment induces virion internalization predominantly through clathrin- and caveolin-independent endocytosis. Functionally, forms the virion spikes together with glycoprotein G1. The glycoprotein spike trimers are connected to the underlying matrix. Class I viral fusion protein that directs fusion of viral and host endosomal membranes, leading to delivery of the nucleocapsid into the cytoplasm. Membrane fusion is mediated by irreversible conformational changes induced by acidification. This Bolomys (OLVV) protein is Pre-glycoprotein polyprotein GP complex.